The primary structure comprises 353 residues: Phospho-N-acetylmuramoyl-pentapeptide-transferase (353 aa).

The next 10 helical transmembrane spans lie at 24-44 (LGFFIAFFLTLFLMPKFILWA), 66-86 (TPTMGGIVFVFATIIASLLCA), 88-108 (LGNPYVLLGIIVLVGFSFVGF), 129-149 (FGMLFVLSLVVSVLLSVKGLD), 160-180 (PLFEMPTALAVGFWVLVFLSA), 192-212 (GLASVPSIFTLLSLSIFVYVA), 229-249 (VGELFVISLALIGSLFGFLWY), 256-276 (VFMGDSGSLALGGFIAYNAIV), 281-301 (ILLVLMGSIFVIETLSVILQV), and 330-350 (KVIVRFWIISMLSNLVALLSL).

This sequence belongs to the glycosyltransferase 4 family. MraY subfamily. Mg(2+) is required as a cofactor.

Its subcellular location is the cell inner membrane. It catalyses the reaction UDP-N-acetyl-alpha-D-muramoyl-L-alanyl-gamma-D-glutamyl-meso-2,6-diaminopimeloyl-D-alanyl-D-alanine + di-trans,octa-cis-undecaprenyl phosphate = di-trans,octa-cis-undecaprenyl diphospho-N-acetyl-alpha-D-muramoyl-L-alanyl-D-glutamyl-meso-2,6-diaminopimeloyl-D-alanyl-D-alanine + UMP. The protein operates within cell wall biogenesis; peptidoglycan biosynthesis. Its function is as follows. Catalyzes the initial step of the lipid cycle reactions in the biosynthesis of the cell wall peptidoglycan: transfers peptidoglycan precursor phospho-MurNAc-pentapeptide from UDP-MurNAc-pentapeptide onto the lipid carrier undecaprenyl phosphate, yielding undecaprenyl-pyrophosphoryl-MurNAc-pentapeptide, known as lipid I. This Helicobacter acinonychis (strain Sheeba) protein is Phospho-N-acetylmuramoyl-pentapeptide-transferase.